Consider the following 302-residue polypeptide: 4-diphosphocytidyl-2-C-methyl-D-erythritol kinase (302 aa).

Lys32 is a catalytic residue. 115–125 serves as a coordination point for ATP; sequence PMGGGVGGGSS. Asp157 is an active-site residue.

It belongs to the GHMP kinase family. IspE subfamily.

It catalyses the reaction 4-CDP-2-C-methyl-D-erythritol + ATP = 4-CDP-2-C-methyl-D-erythritol 2-phosphate + ADP + H(+). It functions in the pathway isoprenoid biosynthesis; isopentenyl diphosphate biosynthesis via DXP pathway; isopentenyl diphosphate from 1-deoxy-D-xylulose 5-phosphate: step 3/6. In terms of biological role, catalyzes the phosphorylation of the position 2 hydroxy group of 4-diphosphocytidyl-2C-methyl-D-erythritol. In Actinobacillus succinogenes (strain ATCC 55618 / DSM 22257 / CCUG 43843 / 130Z), this protein is 4-diphosphocytidyl-2-C-methyl-D-erythritol kinase.